Consider the following 289-residue polypeptide: Pre-mRNA-splicing factor cwf23 (289 aa).

Residues Asp9–Arg74 enclose the J domain. Positions Glu129–Ser148 are enriched in basic and acidic residues. Disordered stretches follow at residues Glu129–Ser161 and Lys269–Ala289.

This sequence belongs to the DnaJ family. Belongs to the 40S cdc5-associated complex (or cwf complex), a spliceosome sub-complex reminiscent of a late-stage spliceosome composed of the U2, U5 and U6 snRNAs and at least brr2, cdc5, cwf2/prp3, cwf3/syf1, cwf4/syf3, cwf5/ecm2, spp42/cwf6, cwf7/spf27, cwf8, cwf9, cwf10, cwf11, cwf12, prp45/cwf13, cwf14, cwf15, cwf16, cwf17, cwf18, cwf19, cwf20, cwf21, cwf22, cwf23, cwf24, cwf25, cwf26, cyp7/cwf27, cwf28, cwf29/ist3, lea1, msl1, prp5/cwf1, prp10, prp12/sap130, prp17, prp22, sap61, sap62, sap114, sap145, slu7, smb1, smd1, smd3, smf1, smg1 and syf2.

It localises to the cytoplasm. The protein resides in the nucleus. Functionally, involved in pre-mRNA splicing. May be involved in endoplasmic reticulum-associated protein degradation (ERAD) and required for growth at low and high temperatures. In Schizosaccharomyces pombe (strain 972 / ATCC 24843) (Fission yeast), this protein is Pre-mRNA-splicing factor cwf23 (cwf23).